The following is a 434-amino-acid chain: Cyclic 2,3-diphosphoglycerate synthetase (434 aa).

The protein belongs to the cyclic 2,3-diphosphoglycerate synthetase family.

The protein localises to the cytoplasm. The enzyme catalyses (2R)-2,3-bisphosphoglycerate + ATP + H(+) = cyclic (2R)-2,3-bisphosphoglycerate + ADP + phosphate. Functionally, catalyzes the formation of cyclic 2,3-diphosphoglycerate (cDPG) by formation of an intramolecular phosphoanhydride bond at the expense of ATP. The protein is Cyclic 2,3-diphosphoglycerate synthetase of Thermococcus sibiricus (strain DSM 12597 / MM 739).